We begin with the raw amino-acid sequence, 251 residues long: 2,3-bisphosphoglycerate-dependent phosphoglycerate mutase (251 aa).

Substrate is bound by residues Arg-11–Asn-18, Thr-24–Gly-25, Arg-63, Glu-90–Tyr-93, Lys-101, Arg-117–Arg-118, and Gly-185–Asn-186. The Tele-phosphohistidine intermediate role is filled by His-12. The active-site Proton donor/acceptor is the Glu-90. The segment at Arg-117–Ala-142 is disordered.

It belongs to the phosphoglycerate mutase family. BPG-dependent PGAM subfamily.

It catalyses the reaction (2R)-2-phosphoglycerate = (2R)-3-phosphoglycerate. It functions in the pathway carbohydrate degradation; glycolysis; pyruvate from D-glyceraldehyde 3-phosphate: step 3/5. In terms of biological role, catalyzes the interconversion of 2-phosphoglycerate and 3-phosphoglycerate. The polypeptide is 2,3-bisphosphoglycerate-dependent phosphoglycerate mutase (Clavibacter michiganensis subsp. michiganensis (strain NCPPB 382)).